The sequence spans 110 residues: Large ribosomal subunit protein uL22 (110 aa).

It belongs to the universal ribosomal protein uL22 family. As to quaternary structure, part of the 50S ribosomal subunit.

Functionally, this protein binds specifically to 23S rRNA; its binding is stimulated by other ribosomal proteins, e.g. L4, L17, and L20. It is important during the early stages of 50S assembly. It makes multiple contacts with different domains of the 23S rRNA in the assembled 50S subunit and ribosome. The globular domain of the protein is located near the polypeptide exit tunnel on the outside of the subunit, while an extended beta-hairpin is found that lines the wall of the exit tunnel in the center of the 70S ribosome. This Shewanella halifaxensis (strain HAW-EB4) protein is Large ribosomal subunit protein uL22.